The sequence spans 396 residues: Mevalonate kinase (396 aa).

ATP is bound by residues K13, N55, S135, and 140–146 (GAGLGSS). S146 (proton donor) is an active-site residue. Residues S146 and E193 each coordinate Mg(2+). The active-site Proton acceptor is D204.

Belongs to the GHMP kinase family. Mevalonate kinase subfamily. As to quaternary structure, homodimer. Mg(2+) serves as cofactor.

It localises to the cytoplasm. The protein localises to the peroxisome. The catalysed reaction is (R)-mevalonate + ATP = (R)-5-phosphomevalonate + ADP + H(+). It functions in the pathway isoprenoid biosynthesis; isopentenyl diphosphate biosynthesis via mevalonate pathway; isopentenyl diphosphate from (R)-mevalonate: step 1/3. Its activity is regulated as follows. Farnesyl pyrophosphate and geranyl pyrophosphate inhibit mevalonate kinase activity by binding competitively at the ATP-binding sites. Functionally, catalyzes the phosphorylation of mevalonate to mevalonate 5-phosphate, a key step in isoprenoid and cholesterol biosynthesis. The polypeptide is Mevalonate kinase (Bos taurus (Bovine)).